A 347-amino-acid chain; its full sequence is Heat-inducible transcription repressor HrcA (347 aa).

Belongs to the HrcA family.

Its function is as follows. Negative regulator of class I heat shock genes (grpE-dnaK-dnaJ and groELS operons). Prevents heat-shock induction of these operons. The chain is Heat-inducible transcription repressor HrcA from Rhodococcus erythropolis (strain PR4 / NBRC 100887).